A 321-amino-acid polypeptide reads, in one-letter code: Cytochrome c biogenesis protein CcsA (321 aa).

7 helical membrane passes run 9-29, 44-64, 68-88, 143-163, 225-245, 259-273, and 288-308; these read ILTH…LITL, GMIA…VSSG, LSNL…LHTI, MLLS…LLII, VISL…VWAN, TWAF…IYLH, and VASI…LLGI.

The protein belongs to the CcmF/CycK/Ccl1/NrfE/CcsA family. As to quaternary structure, may interact with Ccs1.

Its subcellular location is the plastid. It localises to the chloroplast thylakoid membrane. Required during biogenesis of c-type cytochromes (cytochrome c6 and cytochrome f) at the step of heme attachment. This chain is Cytochrome c biogenesis protein CcsA, found in Zea mays (Maize).